A 1406-amino-acid polypeptide reads, in one-letter code: DNA-directed RNA polymerase subunit beta' (1406 aa).

Zn(2+) is bound by residues Cys-70, Cys-72, Cys-85, and Cys-88. Mg(2+) is bound by residues Asp-460, Asp-462, and Asp-464. Residues Cys-814, Cys-888, Cys-895, and Cys-898 each contribute to the Zn(2+) site.

The protein belongs to the RNA polymerase beta' chain family. The RNAP catalytic core consists of 2 alpha, 1 beta, 1 beta' and 1 omega subunit. When a sigma factor is associated with the core the holoenzyme is formed, which can initiate transcription. The cofactor is Mg(2+). Requires Zn(2+) as cofactor.

It carries out the reaction RNA(n) + a ribonucleoside 5'-triphosphate = RNA(n+1) + diphosphate. In terms of biological role, DNA-dependent RNA polymerase catalyzes the transcription of DNA into RNA using the four ribonucleoside triphosphates as substrates. The sequence is that of DNA-directed RNA polymerase subunit beta' from Sodalis glossinidius (strain morsitans).